Consider the following 978-residue polypeptide: Chitin synthase 3 (978 aa).

A compositionally biased stretch (low complexity) spans 1 to 13; the sequence is MGFNPQGQGNGPN. 2 disordered regions span residues 1–95 and 108–127; these read MGFN…FDGH and GHYPADQHGRMPGSPGYEYP. A glycan (N-linked (GlcNAc...) asparagine) is linked at asparagine 72. N-linked (GlcNAc...) asparagine glycosylation is present at asparagine 604. Helical transmembrane passes span 641–661, 686–706, 719–739, 775–795, 803–823, 908–928, and 946–966; these read LVNVLFSWFSLAAFYLTTTII, IVNVLIKYIYIAFLVLQFVLA, VLSFMVFGLIQLYLLVLTGYL, LIIIALFTIYGLNYIASFLYL, SFPQYLVLMSTYINILMVYAF, VILWLLCNIVLIVVVTTDDFI, and VLLYSTAVLSIVRFFGFLWFI.

This sequence belongs to the chitin synthase family. Class III subfamily.

It localises to the cell membrane. The enzyme catalyses [(1-&gt;4)-N-acetyl-beta-D-glucosaminyl](n) + UDP-N-acetyl-alpha-D-glucosamine = [(1-&gt;4)-N-acetyl-beta-D-glucosaminyl](n+1) + UDP + H(+). Functionally, polymerizes chitin, a structural polymer of the cell wall and septum, by transferring the sugar moiety of UDP-GlcNAc to the non-reducing end of the growing chitin polymer. Is essential for viability. This Fusarium oxysporum f. sp. lycopersici (strain 4287 / CBS 123668 / FGSC 9935 / NRRL 34936) (Fusarium vascular wilt of tomato) protein is Chitin synthase 3.